The following is a 155-amino-acid chain: Small ribosomal subunit protein uS9 (155 aa).

This sequence belongs to the universal ribosomal protein uS9 family.

The sequence is that of Small ribosomal subunit protein uS9 from Rhizobium meliloti (strain 1021) (Ensifer meliloti).